A 449-amino-acid chain; its full sequence is Guanine nucleotide-binding protein alpha-2 subunit (449 aa).

The segment at 1–91 is disordered; the sequence is MGLCASSEKN…TATANTSGSQ (91 aa). Glycine 2 is lipidated: N-myristoyl glycine. Cysteine 4 carries S-palmitoyl cysteine lipidation. 2 stretches are compositionally biased toward polar residues: residues 7-23 and 38-48; these read SEKN…SAGS and QKTVRTVNTAN. The span at 49-59 shows a compositional bias: low complexity; that stretch reads QQEKQQQRQQQ. Over residues 72-91 the composition is skewed to polar residues; it reads NGSINNAISPTATANTSGSQ. The region spanning 122-448 is the G-alpha domain; that stretch reads KELKVLLLGA…ENTLKDSGVL (327 aa). The tract at residues 125 to 138 is G1 motif; it reads KVLLLGAGESGKST. Residues glutamate 133, serine 134, glycine 135, lysine 136, serine 137, threonine 138, aspartate 245, leucine 270, threonine 276, glycine 299, asparagine 365, lysine 366, aspartate 368, and alanine 420 each coordinate GTP. Serine 137 contributes to the Mg(2+) binding site. Residues 268–276 form a G2 motif region; sequence DILRSRQMT. Position 276 (threonine 276) interacts with Mg(2+). The G3 motif stretch occupies residues 292 to 301; the sequence is MHIYDVGGQR. The interval 361–368 is G4 motif; it reads VLFLNKID. The segment at 418–423 is G5 motif; that stretch reads TQATDT.

It belongs to the G-alpha family. G(q) subfamily. As to quaternary structure, g proteins are composed of 3 units; alpha, beta and gamma. The alpha chain contains the guanine nucleotide binding site. GPA2 interacts with the kelch repeat beta-mimic proteins GPB1 and GPB2 and with the gamma subunit GPG1. Interacts with the G protein coupled receptor GPR1. Also interacts with regulators of G protein signaling (RGS) protein RGS2. The cofactor is Mg(2+). In terms of processing, myristoylation at Gly-2 and palmitoylation at Cys-4 are required for membrane localization and function of the protein.

The protein resides in the cell membrane. Its activity is regulated as follows. Alternates between an inactive form bound to GDP and an active form bound to GTP. Activated by the G protein coupled receptor (GPCR) GPR1, which serves as a guanine nucleotide-exchange factor (GEF), and inactivated by RGS2, acting as a GTPase-activating protein (GAP) for GPA2. Functionally, alpha subunit of the heterotrimeric guanine nucleotide-binding protein (G protein) involved in glucose-induced cAMP signaling. Binds to its cognate transmembrane receptor GPR1, which senses extracellular carbon sources, and activates cAMP-PKA signaling and governs diploid pseudohyphal differentiation and haploid invasive growth. The G protein beta-mimic proteins GPB1 and GPB2 inhibit GPA2-GPR1 coupling, probably to reduce signaling in the absence of glucose. The protein is Guanine nucleotide-binding protein alpha-2 subunit (GPA2) of Saccharomyces cerevisiae (strain ATCC 204508 / S288c) (Baker's yeast).